Here is a 182-residue protein sequence, read N- to C-terminus: Adenylate kinase (182 aa).

An ATP-binding site is contributed by Gly12–Thr17. Residues Ser32–Val61 are NMP. Residues Thr33, Arg38, Glu59–Val61, Gly85–Arg88, and Gln92 contribute to the AMP site. The tract at residues Ala126–Asp132 is LID. Arg127 lines the ATP pocket. AMP-binding residues include Arg129 and Arg140. Position 168 (Gly168) interacts with ATP.

Belongs to the adenylate kinase family. As to quaternary structure, monomer.

Its subcellular location is the cytoplasm. It catalyses the reaction AMP + ATP = 2 ADP. Its pathway is purine metabolism; AMP biosynthesis via salvage pathway; AMP from ADP: step 1/1. Functionally, catalyzes the reversible transfer of the terminal phosphate group between ATP and AMP. Plays an important role in cellular energy homeostasis and in adenine nucleotide metabolism. The protein is Adenylate kinase of Synechococcus sp. (strain RCC307).